We begin with the raw amino-acid sequence, 336 residues long: MGSGEEPSQMRRALVDSLAGAISGGISRTVTSPLDVIKIRFQVQLEPTTSWGILRRDVYGPSKYTGLLQATKDILREEGLPGFWRGNVPALFMYMPYTAIQFTVLHKLKTFASGSSRTEDHLDLSPYLSYVSGAIAGCTATIGSYPFDLLRTILASQGEPKVYPNMRSAFIDIIKTRGVQGLYSGLSPTLVEIIPYAGLQFGSYDTFKRSMMTWNRYKYSHLSFGSEDDSVSSFQLFLCGFAAGTFSKAACHPLDVVKKRFQIEGLKRHPRYGAPIESSTYKGMYHALKEIVVKEGFGGLYKGLFPSLVKSAPAGAVTFVVYEYISDWIGCKAGVE.

6 consecutive transmembrane segments (helical) span residues 11 to 27 (RRAL…GGIS), 88 to 105 (VPAL…FTVL), 127 to 150 (YLSY…FDLL), 182 to 199 (LYSG…YAGL), 230 to 246 (SVSS…AGTF), and 303 to 322 (GLFP…FVVY). Solcar repeat units follow at residues 11–111 (RRAL…LKTF), 124–210 (LSPY…FKRS), and 231–328 (VSSF…ISDW).

Belongs to the mitochondrial carrier (TC 2.A.29) family. As to expression, ubiquitous with highest expression in pollen.

It localises to the mitochondrion inner membrane. Functionally, mitochondrial transporter that mediates uptake of thiamine diphosphate (ThDP) into mitochondria. This chain is Mitochondrial thiamine diphosphate carrier 1, found in Zea mays (Maize).